The primary structure comprises 193 residues: Nucleoside triphosphate pyrophosphatase (193 aa).

D70 (proton acceptor) is an active-site residue.

This sequence belongs to the Maf family. Requires a divalent metal cation as cofactor.

The protein resides in the cytoplasm. The catalysed reaction is a ribonucleoside 5'-triphosphate + H2O = a ribonucleoside 5'-phosphate + diphosphate + H(+). It carries out the reaction a 2'-deoxyribonucleoside 5'-triphosphate + H2O = a 2'-deoxyribonucleoside 5'-phosphate + diphosphate + H(+). Functionally, nucleoside triphosphate pyrophosphatase. May have a dual role in cell division arrest and in preventing the incorporation of modified nucleotides into cellular nucleic acids. The chain is Nucleoside triphosphate pyrophosphatase from Anaplasma phagocytophilum (strain HZ).